Consider the following 342-residue polypeptide: Holliday junction branch migration complex subunit RuvB (342 aa).

The interval 1–21 (MSVEHSPVDPSAEPPEKAEEA) is disordered. A large ATPase domain (RuvB-L) region spans residues 1–184 (MSVEHSPVDP…FGFTAQLDYY (184 aa)). Residues Leu-23, Arg-24, Gly-65, Lys-68, Thr-69, Thr-70, 131–133 (EDF), Arg-174, Tyr-184, and Arg-221 each bind ATP. Position 69 (Thr-69) interacts with Mg(2+). The tract at residues 185-255 (EVADLERIVT…GAETALDLYE (71 aa)) is small ATPAse domain (RuvB-S). The segment at 258–342 (PLGLDRLDRA…PPDSSGEGLF (85 aa)) is head domain (RuvB-H). 2 residues coordinate DNA: Arg-313 and Arg-318.

This sequence belongs to the RuvB family. Homohexamer. Forms an RuvA(8)-RuvB(12)-Holliday junction (HJ) complex. HJ DNA is sandwiched between 2 RuvA tetramers; dsDNA enters through RuvA and exits via RuvB. An RuvB hexamer assembles on each DNA strand where it exits the tetramer. Each RuvB hexamer is contacted by two RuvA subunits (via domain III) on 2 adjacent RuvB subunits; this complex drives branch migration. In the full resolvosome a probable DNA-RuvA(4)-RuvB(12)-RuvC(2) complex forms which resolves the HJ.

The protein resides in the cytoplasm. It carries out the reaction ATP + H2O = ADP + phosphate + H(+). In terms of biological role, the RuvA-RuvB-RuvC complex processes Holliday junction (HJ) DNA during genetic recombination and DNA repair, while the RuvA-RuvB complex plays an important role in the rescue of blocked DNA replication forks via replication fork reversal (RFR). RuvA specifically binds to HJ cruciform DNA, conferring on it an open structure. The RuvB hexamer acts as an ATP-dependent pump, pulling dsDNA into and through the RuvAB complex. RuvB forms 2 homohexamers on either side of HJ DNA bound by 1 or 2 RuvA tetramers; 4 subunits per hexamer contact DNA at a time. Coordinated motions by a converter formed by DNA-disengaged RuvB subunits stimulates ATP hydrolysis and nucleotide exchange. Immobilization of the converter enables RuvB to convert the ATP-contained energy into a lever motion, pulling 2 nucleotides of DNA out of the RuvA tetramer per ATP hydrolyzed, thus driving DNA branch migration. The RuvB motors rotate together with the DNA substrate, which together with the progressing nucleotide cycle form the mechanistic basis for DNA recombination by continuous HJ branch migration. Branch migration allows RuvC to scan DNA until it finds its consensus sequence, where it cleaves and resolves cruciform DNA. This chain is Holliday junction branch migration complex subunit RuvB, found in Cutibacterium acnes (strain DSM 16379 / KPA171202) (Propionibacterium acnes).